A 338-amino-acid chain; its full sequence is D-erythrose-4-phosphate dehydrogenase (338 aa).

12–13 is an NAD(+) binding site; sequence RI. Residues 154 to 156, R200, 213 to 214, and R236 contribute to the substrate site; these read SCT and TK. C155 serves as the catalytic Nucleophile. Residue N318 coordinates NAD(+).

The protein belongs to the glyceraldehyde-3-phosphate dehydrogenase family. Epd subfamily. As to quaternary structure, homotetramer.

The protein localises to the cytoplasm. The catalysed reaction is D-erythrose 4-phosphate + NAD(+) + H2O = 4-phospho-D-erythronate + NADH + 2 H(+). Its pathway is cofactor biosynthesis; pyridoxine 5'-phosphate biosynthesis; pyridoxine 5'-phosphate from D-erythrose 4-phosphate: step 1/5. Functionally, catalyzes the NAD-dependent conversion of D-erythrose 4-phosphate to 4-phosphoerythronate. The protein is D-erythrose-4-phosphate dehydrogenase of Pectobacterium carotovorum subsp. carotovorum (strain PC1).